We begin with the raw amino-acid sequence, 429 residues long: uncharacterized protein (429 aa).

10 helical membrane-spanning segments follow: residues 26-46, 51-71, 99-119, 135-155, 173-193, 223-243, 278-298, 311-331, 361-381, and 407-427; these read VALTGAAAVVVLPVITSHDIF, TGIDWDVIFLLVGMMIIVGVL, LVLVSALASALLDNVTTVLLI, TSFLMAEVFASNIGGAATLVG, FMLHLTPLVVIVLIALIAVLP, LLVKCGAVLVLVFAAFVAHPV, TLLFFAGLFIMVGALVKTGVV, GNIVATAFLILGVSAPISGII, WWALALGADFGGNLTAIGASA, and VVTAVSIALAAIYLWLRYFVL.

This sequence belongs to the CitM (TC 2.A.11) transporter family.

The protein resides in the cell membrane. This is an uncharacterized protein from Mycobacterium tuberculosis (strain ATCC 25618 / H37Rv).